The following is a 234-amino-acid chain: MEFSPAFETGVLVQRYKRFLTDITLDNGEQVTIHCPNTGSMKNCLFPGEKVWFSTSDNPKRKYSRTWELAQTPEGHIIGINTGRANALAEEAIHAGVITELQGYHSLRREVKYGSENSRIDILLEDTKKPNCYIEVKSCTLLEEGQGYFPDAVTARGQKHLRELMEMVEQGQRAVLLFVVQHSGIKSVQAATHIDAEYAELLSKAYHKGVEIIAYSTDSSPLGASLVKSCPVRL.

The protein belongs to the SfsA family.

This Shewanella pealeana (strain ATCC 700345 / ANG-SQ1) protein is Sugar fermentation stimulation protein homolog.